The sequence spans 774 residues: Beta-D-xylosidase 1 (774 aa).

Positions 1 to 30 are cleaved as a signal peptide; the sequence is MSCYNKALLIGNKVVVILVFLLCLVHSSES. An N-linked (GlcNAc...) asparagine glycan is attached at Asn131. Residue Asp296 is part of the active site. Asn658 carries an N-linked (GlcNAc...) asparagine glycan.

It belongs to the glycosyl hydrolase 3 family. As to expression, expressed in leaves, stems, seedlings, roots, inflorescences, siliques and developing seeds. Expressed in the vasculature of the roots, leaves, flowers and silique. Expressed in tissues undergoing secondary cell wall thickening such as protoxylem, metaxylem, intrafascicular cambium and fibers.

It localises to the secreted. Its subcellular location is the extracellular space. The protein localises to the extracellular matrix. It carries out the reaction Hydrolysis of terminal non-reducing alpha-L-arabinofuranoside residues in alpha-L-arabinosides.. Its function is as follows. Involved in pectic arabinan modification in mucilage secretory cells. Also acts as a beta-D-xylosidase during the remodeling of xylans in vascular development. The sequence is that of Beta-D-xylosidase 1 (BXL1) from Arabidopsis thaliana (Mouse-ear cress).